The sequence spans 338 residues: S-adenosylmethionine:tRNA ribosyltransferase-isomerase (338 aa).

Belongs to the QueA family. As to quaternary structure, monomer.

It is found in the cytoplasm. The enzyme catalyses 7-aminomethyl-7-carbaguanosine(34) in tRNA + S-adenosyl-L-methionine = epoxyqueuosine(34) in tRNA + adenine + L-methionine + 2 H(+). It participates in tRNA modification; tRNA-queuosine biosynthesis. Functionally, transfers and isomerizes the ribose moiety from AdoMet to the 7-aminomethyl group of 7-deazaguanine (preQ1-tRNA) to give epoxyqueuosine (oQ-tRNA). This is S-adenosylmethionine:tRNA ribosyltransferase-isomerase from Carboxydothermus hydrogenoformans (strain ATCC BAA-161 / DSM 6008 / Z-2901).